Reading from the N-terminus, the 202-residue chain is Ras-related protein RABD2c (202 aa).

GTP-binding positions include 15–23, 33–40, 63–67, 121–124, and 151–153; these read GDSGVGKSC, YLDSYIST, DTAGQ, NKCD, and SAK. Positions 37–45 match the Effector region motif; sequence YISTIGVDF. Residues 174–202 form a disordered region; the sequence is ASQPAGGSKPPTVQIRGQPVNQQSGCCSS. A compositionally biased stretch (polar residues) spans 192–202; sequence PVNQQSGCCSS. S-geranylgeranyl cysteine attachment occurs at residues Cys199 and Cys200.

The protein belongs to the small GTPase superfamily. Rab family.

The protein resides in the cell membrane. It is found in the golgi apparatus. The protein localises to the trans-Golgi network membrane. Its subcellular location is the golgi apparatus membrane. In terms of biological role, protein transport. Regulator of membrane traffic from the Golgi apparatus towards the endoplasmic reticulum (ER). The polypeptide is Ras-related protein RABD2c (RABD2C) (Arabidopsis thaliana (Mouse-ear cress)).